The following is a 122-amino-acid chain: Large ribosomal subunit protein uL14 (122 aa).

In terms of assembly, forms a cluster with proteins L3 and L19. In the 70S ribosome, L14 and L19 interact and together make contacts with the 16S rRNA in bridges B5 and B8. Part of the 50S ribosomal subunit.

Its function is as follows. Binds to 23S rRNA. Forms part of two intersubunit bridges in the 70S ribosome. This chain is Large ribosomal subunit protein uL14, found in Rhodopseudomonas palustris (strain ATCC BAA-98 / CGA009).